Reading from the N-terminus, the 340-residue chain is Putative pyridoxal kinase C18.10 (340 aa).

Substrate is bound by residues serine 19 and tyrosine 130. Residues threonine 189–serine 190 and glutamine 218–glycine 230 contribute to the ATP site. Aspartate 231 contributes to the substrate binding site.

Belongs to the pyridoxine kinase family. It depends on a divalent metal cation as a cofactor.

It localises to the cytoplasm. The protein resides in the nucleus. It carries out the reaction pyridoxal + ATP = pyridoxal 5'-phosphate + ADP + H(+). In terms of biological role, required for synthesis of pyridoxal-5-phosphate from vitamin B6. This Schizosaccharomyces pombe (strain 972 / ATCC 24843) (Fission yeast) protein is Putative pyridoxal kinase C18.10.